Reading from the N-terminus, the 247-residue chain is uncharacterized protein (247 aa).

Positions 11 to 85 (GMSIGAVLDL…LKVIRAQLDA (75 aa)) constitute an HTH merR-type domain. A DNA-binding region (H-T-H motif) is located at residues 14–38 (IGAVLDLLRPDFPDVTISKIRFLEA).

In terms of assembly, homodimer.

In terms of biological role, transcriptional regulator that binds to its own promoter and thus may play a role in the regulation of the cotranscribed genes Rv1827 and Rv1828. Can also bind several promoter regions of genes that are essential, including ftsZ. Binds to the imperfect everted repeat sequence CTCAA through its winged-HTH motif. This is an uncharacterized protein from Mycobacterium tuberculosis (strain ATCC 25618 / H37Rv).